Reading from the N-terminus, the 668-residue chain is Endoplasmic reticulum oxidoreductin-1 (668 aa).

An N-terminal signal peptide occupies residues 1–22 (MKPASRLFYLSLFALWSPEAQC). Disulfide bonds link C79/C413, C89/C94, C150/C352, and C416/C419. A disordered region spans residues 116 to 142 (KLEGPRAKHPGKSVQKEEPKRPLQGKL). FAD contacts are provided by R186, T188, W199, S282, and H285. 2 N-linked (GlcNAc...) asparagine glycosylation sites follow: N298 and N307. Residue R314 coordinates FAD. N-linked (GlcNAc...) asparagine glycosylation is present at N406. C416 (nucleophile) is an active-site residue. C419 is an active-site residue. An N-linked (GlcNAc...) asparagine glycan is attached at N443. 2 disordered regions span residues 488-519 (VEES…DRAK) and 554-597 (GVTP…DPNF). The segment covering 494 to 509 (GQQPQSHEQIEGSENS) has biased composition (polar residues). The span at 570–581 (DNNDDDDDDDEF) shows a compositional bias: acidic residues.

It belongs to the EROs family. May function both as a monomer and a homodimer. FAD is required as a cofactor.

The protein localises to the endoplasmic reticulum membrane. Its function is as follows. Essential oxidoreductase that oxidizes proteins in the endoplasmic reticulum to produce disulfide bonds. Acts by oxidizing directly pdi1 isomerase through a direct disulfide exchange. Does not act as a direct oxidant of folding substrate, but relies on pdi1 to transfer oxidizing equivalent. Does not oxidize all pdi related proteins, suggesting that it can discriminate between pdi1 and related proteins. Its reoxidation probably involves electron transfer to molecular oxygen via FAD. Acts independently of glutathione. May be responsible for a significant proportion of reactive oxygen species (ROS) in the cell, thereby being a source of oxidative stress. In Neurospora crassa (strain ATCC 24698 / 74-OR23-1A / CBS 708.71 / DSM 1257 / FGSC 987), this protein is Endoplasmic reticulum oxidoreductin-1 (ero-1).